Reading from the N-terminus, the 342-residue chain is tRNA N6-adenosine threonylcarbamoyltransferase (342 aa).

Fe cation-binding residues include H111 and H115. Residues 134–138 (LVSGG), D167, G180, and N277 each bind substrate. D305 lines the Fe cation pocket.

It belongs to the KAE1 / TsaD family. Fe(2+) is required as a cofactor.

The protein resides in the cytoplasm. The catalysed reaction is L-threonylcarbamoyladenylate + adenosine(37) in tRNA = N(6)-L-threonylcarbamoyladenosine(37) in tRNA + AMP + H(+). In terms of biological role, required for the formation of a threonylcarbamoyl group on adenosine at position 37 (t(6)A37) in tRNAs that read codons beginning with adenine. Is involved in the transfer of the threonylcarbamoyl moiety of threonylcarbamoyl-AMP (TC-AMP) to the N6 group of A37, together with TsaE and TsaB. TsaD likely plays a direct catalytic role in this reaction. The sequence is that of tRNA N6-adenosine threonylcarbamoyltransferase from Cellvibrio japonicus (strain Ueda107) (Pseudomonas fluorescens subsp. cellulosa).